The primary structure comprises 1146 residues: Killer toxin subunits alpha/beta (1146 aa).

Residues 1-17 (MNIFYIFLFLLSFVQGL) form the signal peptide. The propeptide occupies 18–29 (EHTHRRGSLVKR). LysM domains follow at residues 205-234 (ADQS…QPIC) and 254-303 (KTYK…NLCV). A Chitin-binding type-1 domain is found at 316–372 (IAECGPLAPGEKYNAKCPLNACCSEFGFCGLTKDYCDKKSSTTGAPGTDGCFSNCGY). 4 disulfides stabilise this stretch: Cys319–Cys338, Cys332–Cys344, Cys337–Cys351, and Cys366–Cys370. The region spanning 383-735 (FKKIAYWLDA…DDTEDPFDEE (353 aa)) is the GH18 domain. Chitin contacts are provided by residues Ile424 and 447-450 (GGWD). Glu495 (proton donor) is an active-site residue. Residues Tyr496, 562–565 (MTYD), and Trp707 contribute to the chitin site. 5 N-linked (GlcNAc...) asparagine glycosylation sites follow: Asn771, Asn858, Asn868, Asn876, and Asn1117.

Belongs to the glycosyl hydrolase 18 family. In terms of assembly, the killer toxin is composed of three subunits: alpha, beta and gamma. Post-translationally, RF2 is potentially split by membrane-bound basic amino acid-specific peptidase to yield the alpha and beta subunits.

It carries out the reaction Random endo-hydrolysis of N-acetyl-beta-D-glucosaminide (1-&gt;4)-beta-linkages in chitin and chitodextrins.. The alpha subunit is a potent exochitinase. Along with the beta subunit it plays a role in the initial interaction of the toxin with sensitive cells and allow the gamma subunit (the active toxin) to gain entry into the cell. The sequence is that of Killer toxin subunits alpha/beta from Kluyveromyces lactis (strain ATCC 8585 / CBS 2359 / DSM 70799 / NBRC 1267 / NRRL Y-1140 / WM37) (Yeast).